A 201-amino-acid chain; its full sequence is Guanylate kinase (201 aa).

One can recognise a Guanylate kinase-like domain in the interval 10–195; the sequence is GKIIILSGPS…CVEEVKNILK (186 aa). ATP is bound at residue 17–24; that stretch reads GPSGVGKG.

It belongs to the guanylate kinase family.

It localises to the cytoplasm. The enzyme catalyses GMP + ATP = GDP + ADP. Its function is as follows. Essential for recycling GMP and indirectly, cGMP. The sequence is that of Guanylate kinase from Mycoplasma mobile (strain ATCC 43663 / 163K / NCTC 11711) (Mesomycoplasma mobile).